An 83-amino-acid polypeptide reads, in one-letter code: Small ribosomal subunit protein uS15c (83 aa).

It belongs to the universal ribosomal protein uS15 family. Part of the 30S ribosomal subunit.

The protein localises to the plastid. Its subcellular location is the chloroplast. The polypeptide is Small ribosomal subunit protein uS15c (rps15) (Fagopyrum esculentum subsp. ancestrale (Wild buckwheat)).